The sequence spans 126 residues: Large ribosomal subunit protein bL12 (126 aa).

Belongs to the bacterial ribosomal protein bL12 family. Homodimer. Part of the ribosomal stalk of the 50S ribosomal subunit. Forms a multimeric L10(L12)X complex, where L10 forms an elongated spine to which 2 to 4 L12 dimers bind in a sequential fashion. Binds GTP-bound translation factors.

Forms part of the ribosomal stalk which helps the ribosome interact with GTP-bound translation factors. Is thus essential for accurate translation. The polypeptide is Large ribosomal subunit protein bL12 (Solibacter usitatus (strain Ellin6076)).